The chain runs to 493 residues: Voltage-gated potassium channel regulatory subunit KCNF1 (493 aa).

Residues 1–183 (MDASAEQSLP…KPESSCPARV (183 aa)) are Cytoplasmic-facing. The helical transmembrane segment at 184 to 204 (VAVLSFLLILVSSVVMCMGTI) threads the bilayer. Residues 224 to 244 (NVETACIGWFTLEYLLRLFSS) traverse the membrane as a helical segment. Topologically, residues 245–249 (PNKLH) are cytoplasmic. The helical transmembrane segment at 250–270 (FALSFMNIVDVLAILPFYVSL) threads the bilayer. A helical; Voltage-sensor transmembrane segment spans residues 290 to 310 (QALRIMRIARIFKLARHSSGL). Residues 311-324 (QTLTYALKRSFKEL) are Cytoplasmic-facing. The chain crosses the membrane as a helical span at residues 325-345 (GLLLMYLAVGIFVFSALGYTM). The segment at residues 358-378 (PQSFWWAIITMTTVGYGDIYP) is an intramembrane region (pore-forming). The Selectivity filter motif lies at 370 to 375 (TVGYGD). Residues 386–406 (NAAISFLCGVIAIALPIHPII) traverse the membrane as a helical segment. The Cytoplasmic segment spans residues 407-493 (NNFVRYYNKQ…HHRTRLQSCK (87 aa)). A disordered region spans residues 434 to 468 (SSSAEGKPGGSRSDLDTLPPEPAAREGPSWGSRLK).

Belongs to the potassium channel family. F (TC 1.A.1.2) subfamily. Kv5.1/KCNF1 sub-subfamily. Heterotetramer with KCNB1 or KCNB2.

It localises to the cell membrane. Regulatory alpha-subunit of the voltage-gated potassium (Kv) channel which, when coassembled with KCNB1 or KCNB2, can modulate their expression and their gating kinetics by acting on deactivation upon repolarization and inactivation during maintained depolarization. Accelerates inactivation but has relatively little effect on deactivation. Coexpression with KCNB1 or KCNB2 markedly slows inactivation. Each modulatory subunit has its own specific properties of regulation, and can lead to extensive inhibitions, to large changes in kinetics, and/or to large shifts in the voltage dependencies of the inactivation process. The gating kinetics depends on the nature and stoichiometry of the associated regulatory sunbunit. Fails to produce a potassium current when expressed alone. The sequence is that of Voltage-gated potassium channel regulatory subunit KCNF1 from Mus musculus (Mouse).